We begin with the raw amino-acid sequence, 279 residues long: Glutamate racemase (279 aa).

Residues 13-14 (DS) and 45-46 (YG) each bind substrate. Residue Cys-76 is the Proton donor/acceptor of the active site. 77–78 (NT) is a substrate binding site. Residue Cys-185 is the Proton donor/acceptor of the active site. A substrate-binding site is contributed by 186–187 (TH).

The protein belongs to the aspartate/glutamate racemases family.

It catalyses the reaction L-glutamate = D-glutamate. Its pathway is cell wall biogenesis; peptidoglycan biosynthesis. Functionally, provides the (R)-glutamate required for cell wall biosynthesis. The protein is Glutamate racemase of Picosynechococcus sp. (strain ATCC 27264 / PCC 7002 / PR-6) (Agmenellum quadruplicatum).